Consider the following 565-residue polypeptide: MVAEDAPVRGTCRVLFRTTTLIFLCTLLALSISILYESLIIRKQIMSQAGSTGSNFRLGSITDLLNNILSVANQIIYNSAVALPLQLDTLESTLLTAIKSLQTSDKLEQNCSWGAALINDNRYINGINQFYFSIAEGRNLTLGPLLNIPSFIPTATTPEGCTRIPSFSLTKTHWCYTHNVILNGCQDHVSSNQFVSMGIIEPTSAGFPSFRTLKTLYLSDGVNRKSCSISTVPGGCMMYCFVSTQPERDDYLSTAPPEQRIIIMYYNDTIVERIINPPGVLDVWATLNPGTGSGVYYLGWVLFPTYGGVIKDTSLWNNQANKYFIPQMVAALCSQNQATQVQNAKSSYYSSWFGNRMIQSGILACPLQQDLTNECLILPFSNDQVLMGAEGRLYMYGDSVYYYQRSNSWWPMTMLYKVTITFTNGQPSAISAQNVPTQQVPRPGTGDCSATNRCPGFCLKGVYADAWLLTNPSSTSTFGSEATFTGSYLNAATQRINPTMYIANNTQIISSQQFGSSGQEAAYGHTTCFRDTGSVMVYCIYIIELSSSLLGQFQIVPFIRQVTLS.

Residues Met1 to Thr20 are Intravirion-facing. A helical transmembrane segment spans residues Leu21–Ile41. Residues Arg42–Ser565 are Virion surface-facing. Asn110 and Asn139 each carry an N-linked (GlcNAc...) asparagine; by host glycan. 3 disulfide bridges follow: Cys161-Cys185, Cys175-Cys236, and Cys227-Cys240. The segment at Asn223–Ser228 is involved in neuraminidase activity. Asn267 carries an N-linked (GlcNAc...) asparagine; by host glycan. 3 disulfides stabilise this stretch: Cys333–Cys454, Cys365–Cys375, and Cys448–Cys458. Residue Asn504 is glycosylated (N-linked (GlcNAc...) asparagine; by host). Cys528 and Cys539 form a disulfide bridge.

The protein belongs to the paramyxoviruses hemagglutinin-neuraminidase family. In terms of assembly, homotetramer; composed of disulfide-linked homodimers. Interacts with F protein trimer.

Its subcellular location is the virion membrane. The protein localises to the host cell membrane. It carries out the reaction Hydrolysis of alpha-(2-&gt;3)-, alpha-(2-&gt;6)-, alpha-(2-&gt;8)- glycosidic linkages of terminal sialic acid residues in oligosaccharides, glycoproteins, glycolipids, colominic acid and synthetic substrates.. Its function is as follows. Attaches the virus to sialic acid-containing cell receptors and thereby initiating infection. Binding of HN protein to the receptor induces a conformational change that allows the F protein to trigger virion/cell membranes fusion. In terms of biological role, neuraminidase activity ensures the efficient spread of the virus by dissociating the mature virions from the neuraminic acid containing glycoproteins. The protein is Hemagglutinin-neuraminidase (HN) of Canis lupus familiaris (Dog).